The sequence spans 87 residues: U3-theraphotoxin-Hhn1o (87 aa).

The first 24 residues, 1-24 (MVNMKASMFLTFAGLVLLFVVCYA), serve as a signal peptide directing secretion. The propeptide occupies 25–52 (SESEEKEFPKEMLSSIFAVDNDFKQEER). Cystine bridges form between cysteine 54-cysteine 67 and cysteine 61-cysteine 72.

The protein belongs to the neurotoxin 10 (Hwtx-1) family. 51 (Hntx-8) subfamily. Hntx-8 sub-subfamily. Expressed by the venom gland.

It is found in the secreted. Functionally, ion channel inhibitor. This Cyriopagopus hainanus (Chinese bird spider) protein is U3-theraphotoxin-Hhn1o.